The primary structure comprises 195 residues: Putative NADH dehydrogenase/NAD(P)H nitroreductase Caul_0018 (195 aa).

It belongs to the nitroreductase family. HadB/RutE subfamily. FMN is required as a cofactor.

This is Putative NADH dehydrogenase/NAD(P)H nitroreductase Caul_0018 from Caulobacter sp. (strain K31).